Here is a 429-residue protein sequence, read N- to C-terminus: Enolase (429 aa).

Glutamine 163 is a (2R)-2-phosphoglycerate binding site. The active-site Proton donor is glutamate 205. Residues aspartate 242, glutamate 287, and aspartate 314 each coordinate Mg(2+). Positions 339, 368, 369, and 390 each coordinate (2R)-2-phosphoglycerate. Catalysis depends on lysine 339, which acts as the Proton acceptor.

It belongs to the enolase family. Mg(2+) is required as a cofactor.

It is found in the cytoplasm. The protein resides in the secreted. The protein localises to the cell surface. The catalysed reaction is (2R)-2-phosphoglycerate = phosphoenolpyruvate + H2O. The protein operates within carbohydrate degradation; glycolysis; pyruvate from D-glyceraldehyde 3-phosphate: step 4/5. Functionally, catalyzes the reversible conversion of 2-phosphoglycerate (2-PG) into phosphoenolpyruvate (PEP). It is essential for the degradation of carbohydrates via glycolysis. The chain is Enolase from Cupriavidus pinatubonensis (strain JMP 134 / LMG 1197) (Cupriavidus necator (strain JMP 134)).